We begin with the raw amino-acid sequence, 68 residues long: MGDQPCASGRSTLPPGNAREAKPPKKRCLLAPRWDYPEGTPNGGSTTLPSAPPPASAGLKSHPPPPEK.

Residues 1–68 are disordered; the sequence is MGDQPCASGR…LKSHPPPPEK (68 aa).

Interacts with mRNA decapping proteins DCP1A, DCP2 and EDC4.

The protein resides in the cytoplasm. It is found in the P-body. Functionally, promotes dispersal of P-body components and is likely to play a role in the mRNA decapping process. The chain is Negative regulator of P-body association from Homo sapiens (Human).